The chain runs to 457 residues: Variant surface glycoprotein 20 (457 aa).

Residues 1-20 (MFTQAVIALIGLVSIRTGKT) form the signal peptide. The segment covering 385-397 (RQTASGDDQSAEN) has biased composition (polar residues). A disordered region spans residues 385 to 406 (RQTASGDDQSAENQCGGKKEDE). N-linked (GlcNAc...) asparagine glycosylation occurs at Asn-436. Ser-440 carries the GPI-anchor amidated serine lipid modification. A propeptide spans 441–457 (NSFVIKKAPLWLAFLLF) (removed in mature form).

The protein resides in the cell membrane. Its function is as follows. VSG forms a coat on the surface of the parasite. The trypanosome evades the immune response of the host by expressing a series of antigenically distinct VSGs from an estimated 1000 VSG genes. The chain is Variant surface glycoprotein 20 from Trypanosoma equiperdum.